A 402-amino-acid polypeptide reads, in one-letter code: Shaggy-related protein kinase GSK2 (402 aa).

The tract at residues 1 to 38 (MDQPAPAPEPMLLDAQPPAAVACDKKQQEGEAPYAEGN) is disordered. The Protein kinase domain maps to 63–347 (YMAERVVGTG…ALDACAHPFF (285 aa)). ATP-binding positions include 69-77 (VGTGSFGIV) and Lys-92. Residue Asp-188 is the Proton acceptor of the active site.

Belongs to the protein kinase superfamily. CMGC Ser/Thr protein kinase family. GSK-3 subfamily. As to quaternary structure, interacts with DLT. Interacts with OFP8. Interacts with GRF4. Interacts with PUB24. Interacts with SMOS1. In terms of processing, autophosphorylated. In terms of tissue distribution, expressed in lamina joints, vascular tissue and nodes.

The protein resides in the cytoplasm. It localises to the nucleus. It carries out the reaction L-seryl-[protein] + ATP = O-phospho-L-seryl-[protein] + ADP + H(+). The catalysed reaction is L-threonyl-[protein] + ATP = O-phospho-L-threonyl-[protein] + ADP + H(+). Its function is as follows. Serine-threonine kinase that acts as a negative regulator of brassinosteroid (BR) signaling. Phosphorylates DLT and BZR1, two positive regulators that mediates several BR responses. Phosphorylation of DLT and BZR1 inhibits their activities in BR signaling. Phosphorylates OFP8, a positive regulator of BR responses. Phosphorylated OFP8 shuttles from the nucleus to the cytoplasm where it is degraded by the proteasome. Phosphorylates the E3 ubiquitin-protein ligase PUB24, a negative regulator of BR signaling, which targets BZR1 and promotes its degradation via the 26S proteasome. Phosphorylation of PUB24 increases its stability. Phosphorylates the AP2-ERF transcription factor SMOS1, a positive regulator of BR signaling, which cooperatively functions in a transactivating complex with BZR1 to enhance the transcription of BR biosynthetic genes. Phosphorylation of SMOS1 leads to its degradation by an unknown mechanism. The polypeptide is Shaggy-related protein kinase GSK2 (Oryza sativa subsp. japonica (Rice)).